The sequence spans 229 residues: Large ribosomal subunit protein uL1 (229 aa).

It belongs to the universal ribosomal protein uL1 family. In terms of assembly, part of the 50S ribosomal subunit.

Binds directly to 23S rRNA. The L1 stalk is quite mobile in the ribosome, and is involved in E site tRNA release. Functionally, protein L1 is also a translational repressor protein, it controls the translation of the L11 operon by binding to its mRNA. This chain is Large ribosomal subunit protein uL1, found in Enterococcus faecalis (strain ATCC 700802 / V583).